A 220-amino-acid polypeptide reads, in one-letter code: Uracil-DNA glycosylase (220 aa).

Asp65 serves as the catalytic Proton acceptor.

The protein belongs to the uracil-DNA glycosylase (UDG) superfamily. UNG family.

It is found in the cytoplasm. It carries out the reaction Hydrolyzes single-stranded DNA or mismatched double-stranded DNA and polynucleotides, releasing free uracil.. Functionally, excises uracil residues from the DNA which can arise as a result of misincorporation of dUMP residues by DNA polymerase or due to deamination of cytosine. This Azobacteroides pseudotrichonymphae genomovar. CFP2 protein is Uracil-DNA glycosylase.